Here is a 467-residue protein sequence, read N- to C-terminus: Indoleacetamide hydrolase (467 aa).

Catalysis depends on charge relay system residues K74 and S149. S173 (acyl-ester intermediate) is an active-site residue.

Belongs to the amidase family.

The protein operates within plant hormone metabolism; auxin biosynthesis. Hydrolyzes indole-3-acetamide (IAM) into indole-3-acetic acid (IAA). The protein is Indoleacetamide hydrolase (tms2) of Rhizobium radiobacter (Agrobacterium tumefaciens).